The chain runs to 642 residues: Threonine--tRNA ligase (642 aa).

The TGS domain maps to 1–61 (MPVITLPDGS…DADATVAIIT (61 aa)). Residues 243 to 534 (DHRKIGKQLD…LTEEFAGFFP (292 aa)) are catalytic. Residues cysteine 334, histidine 385, and histidine 511 each contribute to the Zn(2+) site.

This sequence belongs to the class-II aminoacyl-tRNA synthetase family. Homodimer. It depends on Zn(2+) as a cofactor.

The protein localises to the cytoplasm. It carries out the reaction tRNA(Thr) + L-threonine + ATP = L-threonyl-tRNA(Thr) + AMP + diphosphate + H(+). Its function is as follows. Catalyzes the attachment of threonine to tRNA(Thr) in a two-step reaction: L-threonine is first activated by ATP to form Thr-AMP and then transferred to the acceptor end of tRNA(Thr). Also edits incorrectly charged L-seryl-tRNA(Thr). This chain is Threonine--tRNA ligase, found in Edwardsiella ictaluri (strain 93-146).